The primary structure comprises 853 residues: DNA mismatch repair protein MutS (853 aa).

614–621 serves as a coordination point for ATP; it reads GPNMGGKS.

Belongs to the DNA mismatch repair MutS family.

In terms of biological role, this protein is involved in the repair of mismatches in DNA. It is possible that it carries out the mismatch recognition step. This protein has a weak ATPase activity. This is DNA mismatch repair protein MutS from Escherichia coli (strain K12 / MC4100 / BW2952).